We begin with the raw amino-acid sequence, 418 residues long: Tyrosine--tRNA ligase (418 aa).

L-tyrosine is bound at residue Y34. The 'HIGH' region signature appears at 39–48; sequence PTADSLHLGH. 2 residues coordinate L-tyrosine: Y169 and Q173. The short motif at 229-233 is the 'KMSKS' region element; it reads KFGKS. K232 is a binding site for ATP. In terms of domain architecture, S4 RNA-binding spans 352 to 418; sequence LNLVDMLVTA…GKKKYAVLTY (67 aa).

The protein belongs to the class-I aminoacyl-tRNA synthetase family. TyrS type 1 subfamily. As to quaternary structure, homodimer.

It localises to the cytoplasm. It catalyses the reaction tRNA(Tyr) + L-tyrosine + ATP = L-tyrosyl-tRNA(Tyr) + AMP + diphosphate + H(+). In terms of biological role, catalyzes the attachment of tyrosine to tRNA(Tyr) in a two-step reaction: tyrosine is first activated by ATP to form Tyr-AMP and then transferred to the acceptor end of tRNA(Tyr). This is Tyrosine--tRNA ligase from Streptococcus pyogenes serotype M28 (strain MGAS6180).